We begin with the raw amino-acid sequence, 220 residues long: Aspartic protease inhibitor 2 (220 aa).

The first 23 residues, 1–23 (MMKCLFLLCLCLLPIVVFSSTFT), serve as a signal peptide directing secretion. Residues 24-32 (SQNLIDLPS) constitute a propeptide that is removed on maturation. A Vacuolar targeting signal motif is present at residues 26-31 (NLIDLP). Asparagine 51 carries an N-linked (GlcNAc...) asparagine glycan. 2 disulfide bridges follow: cysteine 80-cysteine 125 and cysteine 174-cysteine 185.

Belongs to the protease inhibitor I3 (leguminous Kunitz-type inhibitor) family. Tubers.

Its subcellular location is the vacuole. Its function is as follows. Inhibitor of cathepsin D (aspartic protease). May also inhibit trypsin and chymotrypsin (serine proteases). Protects the plant by inhibiting proteases of invading organisms. The polypeptide is Aspartic protease inhibitor 2 (Solanum tuberosum (Potato)).